Consider the following 623-residue polypeptide: Glutathione import ATP-binding protein GsiA (623 aa).

ABC transporter domains follow at residues 15–269 (VSGL…QTLL) and 325–564 (LRSG…RKLM). ATP contacts are provided by residues 49-56 (GESGSGKS) and 357-364 (GESGSGKS).

Belongs to the ABC transporter superfamily. Glutathione importer (TC 3.A.1.5.11) family. The complex is composed of two ATP-binding proteins (GsiA), two transmembrane proteins (GsiC and GsiD) and a solute-binding protein (GsiB).

The protein resides in the cell inner membrane. It carries out the reaction glutathione(out) + ATP + H2O = glutathione(in) + ADP + phosphate + H(+). Functionally, part of the ABC transporter complex GsiABCD involved in glutathione import. Responsible for energy coupling to the transport system. The sequence is that of Glutathione import ATP-binding protein GsiA from Salmonella typhi.